A 123-amino-acid polypeptide reads, in one-letter code: Transmembrane protein 254 (123 aa).

Helical transmembrane passes span 15-35, 63-83, and 95-115; these read LFWFTVITVSFGYYTWAVFWP, NGYWLAWLIHVGESLYALVLC, and LLWFLQTFLFGVASLSILIAY.

It localises to the membrane. This is Transmembrane protein 254 from Mus musculus (Mouse).